We begin with the raw amino-acid sequence, 1012 residues long: Klotho (1012 aa).

A signal peptide spans 1 to 33; sequence MPASAPPRRPRPPPPSLSLLLVLLGLGGRRLRA. Topologically, residues 34–981 are extracellular; the sequence is EPGDGAQTWA…ECSFFHTRKS (948 aa). Glycosyl hydrolase-1 stretches follow at residues 57-506 and 515-953; these read FQGT…KNGF and LEGT…SNGF. N-linked (GlcNAc...) asparagine glycosylation is found at asparagine 106, asparagine 159, asparagine 283, asparagine 344, asparagine 607, asparagine 612, and asparagine 694. Residues 982-1002 form a helical membrane-spanning segment; that stretch reads LLAFIAFLFFASIISLSLIFY. The Cytoplasmic portion of the chain corresponds to 1003–1012; it reads YSKKGRRSYK.

It belongs to the glycosyl hydrolase 1 family. Klotho subfamily. In terms of assembly, homodimer. Interacts with FGF23 and FGFR1. In terms of processing, N-glycosylated. In terms of tissue distribution, present in cortical renal tubules (at protein level). Soluble peptide is present in serum and cerebrospinal fluid. Expressed in kidney, placenta, small intestine and prostate. Down-regulated in renal cell carcinomas, hepatocellular carcinomas, and in chronic renal failure kidney.

It is found in the cell membrane. The protein localises to the apical cell membrane. Its subcellular location is the secreted. It catalyses the reaction a beta-D-glucuronoside + H2O = D-glucuronate + an alcohol. May have weak glycosidase activity towards glucuronylated steroids. However, it lacks essential active site Glu residues at positions 239 and 872, suggesting it may be inactive as a glycosidase in vivo. May be involved in the regulation of calcium and phosphorus homeostasis by inhibiting the synthesis of active vitamin D. Essential factor for the specific interaction between FGF23 and FGFR1. In terms of biological role, the Klotho peptide generated by cleavage of the membrane-bound isoform may be an anti-aging circulating hormone which would extend life span by inhibiting insulin/IGF1 signaling. The sequence is that of Klotho (KL) from Homo sapiens (Human).